Here is a 115-residue protein sequence, read N- to C-terminus: Ubiquitin-related modifier 1 (115 aa).

Glycine 115 is modified (1-thioglycine). Glycine 115 participates in a covalent cross-link: Glycyl lysine isopeptide (Gly-Lys) (interchain with K-? in acceptor proteins).

This sequence belongs to the URM1 family. C-terminal thiocarboxylation occurs in 2 steps, it is first acyl-adenylated (-COAMP) via the hesA/moeB/thiF part of UBA4, then thiocarboxylated (-COSH) via the rhodanese domain of UBA4.

Its subcellular location is the cytoplasm. It participates in tRNA modification; 5-methoxycarbonylmethyl-2-thiouridine-tRNA biosynthesis. In terms of biological role, acts as a sulfur carrier required for 2-thiolation of mcm(5)S(2)U at tRNA wobble positions of cytosolic tRNA(Lys), tRNA(Glu) and tRNA(Gln). Serves as sulfur donor in tRNA 2-thiolation reaction by being thiocarboxylated (-COSH) at its C-terminus by the MOCS3 homolog UBA4. The sulfur is then transferred to tRNA to form 2-thiolation of mcm(5)S(2)U. Prior mcm(5) tRNA modification by the elongator complex is required for 2-thiolation. Also acts as a ubiquitin-like protein (UBL) that is covalently conjugated via an isopeptide bond to lysine residues of target proteins such as AHP1. The thiocarboxylated form serves as substrate for conjugation and oxidative stress specifically induces the formation of UBL-protein conjugates. This Coccidioides immitis (strain RS) (Valley fever fungus) protein is Ubiquitin-related modifier 1.